The sequence spans 428 residues: MKLIKYPDRSQWNEILKRPVLETENLFDTVRNIINRVRAGGDRVVMECEAVFDKAELTSLAVTSAEIEEAEKEVPIELKAAIYLAKRNIETFHSAQRFEGKKVDTMEGVTCWQKAVAIEKVGLYIPGGTAPLFSTVLMLAIPAKIAGCKEIVLCTPPDKNGKVHPAILFAARLAGVSKIFKVGGVQAIAAMAYGTESIPKVYKIFGPGNQYVTAAKQLVSLRDVAIDMPAGPSEVEVLADESANPVFVAADLLSQAEHGVDSQAMLVTTSEKLQTEVVYEVERQLGYLTRRDIAEKSLANSKLILVKDMEEALELTNAYAPEHLIIETKDYMEVAGQIVNAGSVFLGAFSPESAGDYASGTNHTLPTNGYAKAYSGVSLDSFIRKITFQEILPSGMSAIGPAIEVMAANEHLDAHKNAVTVRLEEIRK.

Tyr-124, Gln-186, and Asn-209 together coordinate NAD(+). Residues Ser-233, Gln-255, and His-258 each contribute to the substrate site. Zn(2+) contacts are provided by Gln-255 and His-258. Residues Glu-322 and His-323 each act as proton acceptor in the active site. Residues His-323, Asp-356, Glu-410, and His-415 each contribute to the substrate site. Asp-356 serves as a coordination point for Zn(2+). Zn(2+) is bound at residue His-415.

It belongs to the histidinol dehydrogenase family. Zn(2+) serves as cofactor.

The catalysed reaction is L-histidinol + 2 NAD(+) + H2O = L-histidine + 2 NADH + 3 H(+). It functions in the pathway amino-acid biosynthesis; L-histidine biosynthesis; L-histidine from 5-phospho-alpha-D-ribose 1-diphosphate: step 9/9. Catalyzes the sequential NAD-dependent oxidations of L-histidinol to L-histidinaldehyde and then to L-histidine. The sequence is that of Histidinol dehydrogenase from Bacteroides fragilis (strain YCH46).